The sequence spans 337 residues: Ferredoxin--NADP reductase (337 aa).

The FAD site is built by Asp35, Gln43, Tyr48, Val88, Phe123, Asp289, and Thr330.

The protein belongs to the ferredoxin--NADP reductase type 2 family. As to quaternary structure, homodimer. It depends on FAD as a cofactor.

It catalyses the reaction 2 reduced [2Fe-2S]-[ferredoxin] + NADP(+) + H(+) = 2 oxidized [2Fe-2S]-[ferredoxin] + NADPH. The chain is Ferredoxin--NADP reductase from Paramagnetospirillum magneticum (strain ATCC 700264 / AMB-1) (Magnetospirillum magneticum).